Here is a 234-residue protein sequence, read N- to C-terminus: Biosynthetic peptidoglycan transglycosylase (234 aa).

Residues 11-31 traverse the membrane as a helical segment; it reads RFLLFAMLGFVGLSVLLVLVF.

The protein belongs to the glycosyltransferase 51 family.

The protein resides in the cell inner membrane. It catalyses the reaction [GlcNAc-(1-&gt;4)-Mur2Ac(oyl-L-Ala-gamma-D-Glu-L-Lys-D-Ala-D-Ala)](n)-di-trans,octa-cis-undecaprenyl diphosphate + beta-D-GlcNAc-(1-&gt;4)-Mur2Ac(oyl-L-Ala-gamma-D-Glu-L-Lys-D-Ala-D-Ala)-di-trans,octa-cis-undecaprenyl diphosphate = [GlcNAc-(1-&gt;4)-Mur2Ac(oyl-L-Ala-gamma-D-Glu-L-Lys-D-Ala-D-Ala)](n+1)-di-trans,octa-cis-undecaprenyl diphosphate + di-trans,octa-cis-undecaprenyl diphosphate + H(+). It functions in the pathway cell wall biogenesis; peptidoglycan biosynthesis. Functionally, peptidoglycan polymerase that catalyzes glycan chain elongation from lipid-linked precursors. The polypeptide is Biosynthetic peptidoglycan transglycosylase (Chromohalobacter salexigens (strain ATCC BAA-138 / DSM 3043 / CIP 106854 / NCIMB 13768 / 1H11)).